The following is a 114-amino-acid chain: MTTKLERRLKIKAGVRGKISGTTERPRLTVFRSNKQIYAQVIDDTTGKTLAAASSLKLDVKAPKKEIAAKVGELIAKGAQEAGVQTVVFDRNGYLYHGRIKELADAARNGGLKF.

It belongs to the universal ribosomal protein uL18 family. As to quaternary structure, part of the 50S ribosomal subunit; part of the 5S rRNA/L5/L18/L25 subcomplex. Contacts the 5S and 23S rRNAs.

In terms of biological role, this is one of the proteins that bind and probably mediate the attachment of the 5S RNA into the large ribosomal subunit, where it forms part of the central protuberance. The polypeptide is Large ribosomal subunit protein uL18 (Parabacteroides distasonis (strain ATCC 8503 / DSM 20701 / CIP 104284 / JCM 5825 / NCTC 11152)).